We begin with the raw amino-acid sequence, 160 residues long: Cytochrome b6-f complex subunit 4 (160 aa).

A run of 3 helical transmembrane segments spans residues 36–56, 95–115, and 131–151; these read LLYIFPVVILGSIACCGGLAV, LLGVVLMAAVPAGLIAVPFIE, and AVFLFGTFVAIWLGIGATFPI.

This sequence belongs to the cytochrome b family. PetD subfamily. The 4 large subunits of the cytochrome b6-f complex are cytochrome b6, subunit IV (17 kDa polypeptide, petD), cytochrome f and the Rieske protein, while the 4 small subunits are petG, petL, petM and petN. The complex functions as a dimer.

The protein localises to the plastid. Its subcellular location is the cyanelle thylakoid membrane. Its function is as follows. Component of the cytochrome b6-f complex, which mediates electron transfer between photosystem II (PSII) and photosystem I (PSI), cyclic electron flow around PSI, and state transitions. The sequence is that of Cytochrome b6-f complex subunit 4 from Cyanophora paradoxa.